A 158-amino-acid polypeptide reads, in one-letter code: S-ribosylhomocysteine lyase (158 aa).

Fe cation-binding residues include His-54, His-58, and Cys-124.

The protein belongs to the LuxS family. In terms of assembly, homodimer. Fe cation is required as a cofactor.

It catalyses the reaction S-(5-deoxy-D-ribos-5-yl)-L-homocysteine = (S)-4,5-dihydroxypentane-2,3-dione + L-homocysteine. Functionally, involved in the synthesis of autoinducer 2 (AI-2) which is secreted by bacteria and is used to communicate both the cell density and the metabolic potential of the environment. The regulation of gene expression in response to changes in cell density is called quorum sensing. Catalyzes the transformation of S-ribosylhomocysteine (RHC) to homocysteine (HC) and 4,5-dihydroxy-2,3-pentadione (DPD). This chain is S-ribosylhomocysteine lyase, found in Lactobacillus johnsonii (strain CNCM I-12250 / La1 / NCC 533).